A 163-amino-acid polypeptide reads, in one-letter code: Troponin C, skeletal muscle (163 aa).

At A2 the chain carries Blocked amino end (Ala). EF-hand domains follow at residues 18-53 (EMIA…LGQN), 54-89 (PTKE…QMKE), 94-129 (KSEE…TGEH), and 130-163 (VTEE…EGVQ). D31, D33, D37, E42, D67, D69, S71, T73, E78, D107, N109, D111, E118, D143, N145, D147, R149, and E154 together coordinate Ca(2+).

Belongs to the troponin C family.

Troponin is the central regulatory protein of striated muscle contraction. Tn consists of three components: Tn-I which is the inhibitor of actomyosin ATPase, Tn-T which contains the binding site for tropomyosin and Tn-C. The binding of calcium to Tn-C abolishes the inhibitory action of Tn on actin filaments. The protein is Troponin C, skeletal muscle (TNNC2) of Gallus gallus (Chicken).